Consider the following 275-residue polypeptide: Lectin DB58 (275 aa).

The signal sequence occupies residues 1 to 22; the sequence is MASSTVSVVLSLFLLLLTQAYS. N-linked (GlcNAc...) asparagine glycans are attached at residues asparagine 34 and asparagine 101.

Belongs to the leguminous lectin family. Heterodimer, composed of an alpha and a beta subunit derived from a single precursor. Post-translationally, leu-264 is missing in a major portion of the beta subunit, suggesting an origin by sequential removal of amino acids rather than a processing by endoproteolytic cleavage.

Functionally, metalloglycoprotein, containing Ca, Mg, Mn, and Zn and the carbohydrates galactose, glucosamine, mannose, and fucose. It agglutinates erythrocytes of blood group A1. In Vigna unguiculata subsp. cylindrica (Horse gram), this protein is Lectin DB58.